The primary structure comprises 114 residues: MRGNSVDLQEIVLVQQGEVPENAAVHSGEHSDDEGESEEEEREQVQQVPTPRRTLYLVESQCPFCQAIIRFVCVASNTGIRNLQALLVNSHLDLACHACVEQNGVQGLRHRQWQ.

Residues 1 to 43 (MRGNSVDLQEIVLVQQGEVPENAAVHSGEHSDDEGESEEEERE) form an E7 terminal domain region. Positions 17-49 (GEVPENAAVHSGEHSDDEGESEEEEREQVQQVP) are disordered. Residues 31-42 (SDDEGESEEEER) show a composition bias toward acidic residues. The segment at 62-99 (CPFCQAIIRFVCVASNTGIRNLQALLVNSHLDLACHAC) is a zinc-finger region. The Nuclear export signal signature appears at 80–88 (IRNLQALLV).

It belongs to the papillomaviridae E7 protein family. Homodimer. Homooligomer. Interacts with host RB1; this interaction induces dissociation of RB1-E2F1 complex thereby disrupting RB1 activity. Interacts with host EP300; this interaction represses EP300 transcriptional activity. Interacts with protein E2; this interaction inhibits E7 oncogenic activity. Interacts with host TMEM173/STING; this interaction impairs the ability of TMEM173/STING to sense cytosolic DNA and promote the production of type I interferon (IFN-alpha and IFN-beta). Highly phosphorylated.

It is found in the host cytoplasm. The protein localises to the host nucleus. In terms of biological role, plays a role in viral genome replication by driving entry of quiescent cells into the cell cycle. Stimulation of progression from G1 to S phase allows the virus to efficiently use the cellular DNA replicating machinery to achieve viral genome replication. E7 protein has both transforming and trans-activating activities. Induces the disassembly of the E2F1 transcription factor from RB1, with subsequent transcriptional activation of E2F1-regulated S-phase genes. Interferes with host histone deacetylation mediated by HDAC1 and HDAC2, leading to transcription activation. Also plays a role in the inhibition of both antiviral and antiproliferative functions of host interferon alpha. Interaction with host TMEM173/STING impairs the ability of TMEM173/STING to sense cytosolic DNA and promote the production of type I interferon (IFN-alpha and IFN-beta). This Human papillomavirus type 41 protein is Protein E7.